We begin with the raw amino-acid sequence, 572 residues long: Isocitrate dehydrogenase kinase/phosphatase (572 aa).

ATP is bound by residues A317–M323 and K338. The active site involves D373.

It belongs to the AceK family.

The protein localises to the cytoplasm. It catalyses the reaction L-seryl-[isocitrate dehydrogenase] + ATP = O-phospho-L-seryl-[isocitrate dehydrogenase] + ADP + H(+). Bifunctional enzyme which can phosphorylate or dephosphorylate isocitrate dehydrogenase (IDH) on a specific serine residue. This is a regulatory mechanism which enables bacteria to bypass the Krebs cycle via the glyoxylate shunt in response to the source of carbon. When bacteria are grown on glucose, IDH is fully active and unphosphorylated, but when grown on acetate or ethanol, the activity of IDH declines drastically concomitant with its phosphorylation. The sequence is that of Isocitrate dehydrogenase kinase/phosphatase from Ectopseudomonas mendocina (strain ymp) (Pseudomonas mendocina).